The chain runs to 322 residues: Apolipoprotein E (322 aa).

The first 18 residues, 1–18, serve as a signal peptide directing secretion; that stretch reads MKVLWAALLVAFLAGCQG. 8 tandem repeats follow at residues 84–105, 106–127, 128–149, 150–171, 172–193, 194–215, 216–238, and 239–260. The 8 X 22 AA approximate tandem repeats stretch occupies residues 84 to 260; sequence ALMDETMKEL…RLDEVKEQVE (177 aa). Met147 is modified (methionine sulfoxide). A Phosphoserine modification is found at Ser151. The segment at 162–172 is LDL and other lipoprotein receptors binding; it reads HLRKLRKRLLR. 166–169 contributes to the heparin binding site; it reads LRKR. A lipid-binding and lipoprotein association region spans residues 214–295; sequence AATVGSSLAG…SWFEPLVEDM (82 aa). Thr216 carries an O-linked (GalNAc...) threonine glycan. Residue 234–241 participates in heparin binding; the sequence is GERLRARM. A homooligomerization region spans residues 271–322; it reads QQMRLQAEAFQARLKSWFEPLVEDMQRQWAGLVEKVQAAVGASAAPVPGDNH. Residues 283 to 295 are specificity for association with VLDL; that stretch reads RLKSWFEPLVEDM.

It belongs to the apolipoprotein A1/A4/E family. As to quaternary structure, homotetramer. May interact with ABCA1; functionally associated with ABCA1 in the biogenesis of HDLs. May interact with APP/A4 amyloid-beta peptide; the interaction is extremely stable in vitro but its physiological significance is unclear. May interact with MAPT. May interact with MAP2. In the cerebrospinal fluid, interacts with secreted SORL1. Interacts with PMEL; this allows the loading of PMEL luminal fragment on ILVs to induce fibril nucleation. APOE exists as multiple glycosylated and sialylated glycoforms within cells and in plasma. The extent of glycosylation and sialylation are tissue and context specific. In terms of processing, glycated in plasma VLDL. Post-translationally, phosphorylated by FAM20C in the extracellular medium.

Its subcellular location is the secreted. It localises to the extracellular space. It is found in the extracellular matrix. The protein resides in the extracellular vesicle. The protein localises to the endosome. Its subcellular location is the multivesicular body. In terms of biological role, APOE is an apolipoprotein, a protein associating with lipid particles, that mainly functions in lipoprotein-mediated lipid transport between organs via the plasma and interstitial fluids. APOE is a core component of plasma lipoproteins and is involved in their production, conversion and clearance. Apolipoproteins are amphipathic molecules that interact both with lipids of the lipoprotein particle core and the aqueous environment of the plasma. As such, APOE associates with chylomicrons, chylomicron remnants, very low density lipoproteins (VLDL) and intermediate density lipoproteins (IDL) but shows a preferential binding to high-density lipoproteins (HDL). It also binds a wide range of cellular receptors including the LDL receptor/LDLR, the LDL receptor-related proteins LRP1, LRP2 and LRP8 and the very low-density lipoprotein receptor/VLDLR that mediate the cellular uptake of the APOE-containing lipoprotein particles. Finally, APOE also has a heparin-binding activity and binds heparan-sulfate proteoglycans on the surface of cells, a property that supports the capture and the receptor-mediated uptake of APOE-containing lipoproteins by cells. A main function of APOE is to mediate lipoprotein clearance through the uptake of chylomicrons, VLDLs, and HDLs by hepatocytes. APOE is also involved in the biosynthesis by the liver of VLDLs as well as their uptake by peripheral tissues ensuring the delivery of triglycerides and energy storage in muscle, heart and adipose tissues. By participating in the lipoprotein-mediated distribution of lipids among tissues, APOE plays a critical role in plasma and tissues lipid homeostasis. APOE is also involved in two steps of reverse cholesterol transport, the HDLs-mediated transport of cholesterol from peripheral tissues to the liver, and thereby plays an important role in cholesterol homeostasis. First, it is functionally associated with ABCA1 in the biogenesis of HDLs in tissues. Second, it is enriched in circulating HDLs and mediates their uptake by hepatocytes. APOE also plays an important role in lipid transport in the central nervous system, regulating neuron survival and sprouting. The sequence is that of Apolipoprotein E (APOE) from Ateles geoffroyi (Black-handed spider monkey).